Here is a 320-residue protein sequence, read N- to C-terminus: Olfactory receptor 51E2 (320 aa).

Topologically, residues 1 to 27 (MSSCNFTHATFLLIGIPGLEEAHFWFG) are extracellular. N-linked (GlcNAc...) asparagine glycosylation is present at asparagine 5. A helical membrane pass occupies residues 28–48 (FPLLSMYAVALFGNCIVVFIV). Over 49–53 (RTERS) the chain is Cytoplasmic. A helical membrane pass occupies residues 54-74 (LHAPMYLFLCMLAAIDLALST). Over 75 to 98 (STMPKILALFWFDSREITFDACLA) the chain is Extracellular. An intrachain disulfide couples cysteine 96 to cysteine 178. A helical transmembrane segment spans residues 99–119 (QMFFIHTLSAIESTILLAMAF). The Cytoplasmic segment spans residues 120 to 141 (DRYVAICHPLRHAAVLNNTVTV). Residues 142 to 162 (QIGMVALVRGSLFFFPLPLLI) form a helical membrane-spanning segment. The Extracellular portion of the chain corresponds to 163 to 200 (KRLAFCHSNVLSHSYCVHQDVMKLAYTDTLPNVVYGLT). The helical transmembrane segment at 201-221 (AILLVMGVDVMFISLSYFLII) threads the bilayer. At 222–239 (RTVLQLPSKSERAKAFGT) the chain is on the cytoplasmic side. The helical transmembrane segment at 240–260 (CVSHISVVLAFYVPLIGLSVV) threads the bilayer. The Extracellular segment spans residues 261–269 (HRFGNSLDP). Residues 270 to 290 (IVHVLMGDVYLLLPPVINPII) traverse the membrane as a helical segment. Residues 291–320 (YGAKTKQIRTRVLAMFKISCDKDIEAGGNT) lie on the Cytoplasmic side of the membrane.

It belongs to the G-protein coupled receptor 1 family. As to expression, in brain, expressed in medulla oblongata by cells close to the fourth ventricle, in the area postrema, the nucleus tractus solitarius. Expressed in olfactory epithelium and vomeronasal organ. Expressed in kidney by large renal vessels, renal afferent arterioles, and extrarenal vascular beds. In small resistance vessels the expression is restricted to cells of the juxtaglomerular afferent arteriole, which mediate renin secretion. Also detected in small blood vessels in a variety of tissues including heart, diaphragm, skeletal muscle, and skin. In the heart, esophagus, and stomach it is detected in axons of autonomic neurons and neurons of the enteric plexus. Also detected in colon and liver. Expressed in the glomus cells of the carotid body.

It localises to the cell membrane. It is found in the early endosome membrane. Olfactory receptor. The activity of this receptor is probably mediated by G-proteins which induce elevation of intracellular Ca(2+), cAMP and activation of phosphorylation of the protein kinases PKA and MAPK3/MAPK1. Activation of OR51E2 may affect melanocyte proliferation, differentiation, and melanogenesis and may increase proliferation and migration of primary retinal pigment epithelial (RPE) cells. Activated by the short chain fatty acids (SCFA), acetate and propionate. In response to SCFA, may positively regulate renin secretion and increase blood pressure. May also be activated by steroid hormones and regulate cell proliferation. Activated by L-lactate in glomus cells. This Mus musculus (Mouse) protein is Olfactory receptor 51E2 (Or51e2).